A 179-amino-acid polypeptide reads, in one-letter code: Inner membrane-spanning protein YciB (179 aa).

The next 5 membrane-spanning stretches (helical) occupy residues 22 to 42 (IYAATAALIVATAIVLIYSWV), 50 to 70 (MALITFVLVVVFGGLTLFFHN), 76 to 96 (WKVTVIYALFAGALLVSQWVM), 121 to 141 (LAWAVFFILCGLANIYIAFWL), and 149 to 169 (FKVFGLTALTLIFTLLSGIYI).

Belongs to the YciB family.

Its subcellular location is the cell inner membrane. Its function is as follows. Plays a role in cell envelope biogenesis, maintenance of cell envelope integrity and membrane homeostasis. The sequence is that of Inner membrane-spanning protein YciB from Shigella boydii serotype 4 (strain Sb227).